Here is a 283-residue protein sequence, read N- to C-terminus: Polyprenyl-phosphate transporter (283 aa).

Helical transmembrane passes span 27-47, 51-71, 85-105, 112-132, 148-168, 169-189, 197-217, 230-250, and 255-275; these read GTIA…SGIF, FWPS…AMGS, IPTM…LLKI, FTTK…VITL, TSLI…MLLP, GISG…MLAI, FAGL…FIIS, LMTF…VFPG, and IVMW…SLTL.

This sequence belongs to the PopT family.

The protein resides in the cell membrane. With respect to regulation, active in alkaline conditions. Functionally, flippase that catalyzes the transport of undecaprenyl phosphate (UndP) across the cytoplasmic membrane, from the external side to the cytoplasmic side. Is involved in UndP recycling during peptidoglycan synthesis. Necessary for peptidoglycan maintenance. This is Polyprenyl-phosphate transporter from Staphylococcus aureus (strain NCTC 8325 / PS 47).